Reading from the N-terminus, the 520-residue chain is 2-isopropylmalate synthase (520 aa).

The Pyruvate carboxyltransferase domain occupies Val-4 to Val-266. Mn(2+) is bound by residues Asp-13, His-201, His-203, and Asn-237. The regulatory domain stretch occupies residues His-390–Asn-520.

Belongs to the alpha-IPM synthase/homocitrate synthase family. LeuA type 1 subfamily. As to quaternary structure, homodimer. Mn(2+) serves as cofactor.

It is found in the cytoplasm. The enzyme catalyses 3-methyl-2-oxobutanoate + acetyl-CoA + H2O = (2S)-2-isopropylmalate + CoA + H(+). It functions in the pathway amino-acid biosynthesis; L-leucine biosynthesis; L-leucine from 3-methyl-2-oxobutanoate: step 1/4. Catalyzes the condensation of the acetyl group of acetyl-CoA with 3-methyl-2-oxobutanoate (2-ketoisovalerate) to form 3-carboxy-3-hydroxy-4-methylpentanoate (2-isopropylmalate). The chain is 2-isopropylmalate synthase from Streptococcus gallolyticus (strain UCN34).